The sequence spans 188 residues: Adenine phosphoribosyltransferase (188 aa).

This sequence belongs to the purine/pyrimidine phosphoribosyltransferase family. As to quaternary structure, homodimer.

It localises to the cytoplasm. It catalyses the reaction AMP + diphosphate = 5-phospho-alpha-D-ribose 1-diphosphate + adenine. Its pathway is purine metabolism; AMP biosynthesis via salvage pathway; AMP from adenine: step 1/1. In terms of biological role, catalyzes a salvage reaction resulting in the formation of AMP, that is energically less costly than de novo synthesis. This chain is Adenine phosphoribosyltransferase, found in Burkholderia lata (strain ATCC 17760 / DSM 23089 / LMG 22485 / NCIMB 9086 / R18194 / 383).